The primary structure comprises 126 residues: Histone H2B 7 (126 aa).

Over residues 1–12 the composition is skewed to low complexity; the sequence is MPEPAKSAPAPK. Positions 1 to 35 are disordered; sequence MPEPAKSAPAPKKGSKKAVTKTQKKGDKKRKRARK. An N6-acetyllysine mark is found at lysine 6 and lysine 13. The span at 13–34 shows a compositional bias: basic residues; the sequence is KGSKKAVTKTQKKGDKKRKRAR. Position 15 is a phosphoserine (serine 15). N6-acetyllysine occurs at positions 16 and 21. O-linked (GlcNAc) serine glycosylation occurs at serine 113. Lysine 121 is covalently cross-linked (Glycyl lysine isopeptide (Lys-Gly) (interchain with G-Cter in ubiquitin)).

Belongs to the histone H2B family. In terms of assembly, the nucleosome is a histone octamer containing two molecules each of H2A, H2B, H3 and H4 assembled in one H3-H4 heterotetramer and two H2A-H2B heterodimers. The octamer wraps approximately 147 bp of DNA. Monoubiquitination of Lys-121 by the BRE1 gives a specific tag for epigenetic transcriptional activation and is also prerequisite for histone H3 'Lys-4' and 'Lys-79' methylation. Post-translationally, phosphorylated on Ser-15 during apoptosis; which facilitates apoptotic chromatin condensation. In terms of processing, glcNAcylation at Ser-113 promotes monoubiquitination of Lys-121. It fluctuates in response to extracellular glucose, and associates with transcribed genes.

It is found in the nucleus. The protein resides in the chromosome. In terms of biological role, core component of nucleosome. Nucleosomes wrap and compact DNA into chromatin, limiting DNA accessibility to the cellular machineries which require DNA as a template. Histones thereby play a central role in transcription regulation, DNA repair, DNA replication and chromosomal stability. DNA accessibility is regulated via a complex set of post-translational modifications of histones, also called histone code, and nucleosome remodeling. This chain is Histone H2B 7 (H2B-VII), found in Gallus gallus (Chicken).